Here is a 109-residue protein sequence, read N- to C-terminus: Large ribosomal subunit protein uL22 (109 aa).

Belongs to the universal ribosomal protein uL22 family. As to quaternary structure, part of the 50S ribosomal subunit.

This protein binds specifically to 23S rRNA; its binding is stimulated by other ribosomal proteins, e.g. L4, L17, and L20. It is important during the early stages of 50S assembly. It makes multiple contacts with different domains of the 23S rRNA in the assembled 50S subunit and ribosome. Functionally, the globular domain of the protein is located near the polypeptide exit tunnel on the outside of the subunit, while an extended beta-hairpin is found that lines the wall of the exit tunnel in the center of the 70S ribosome. In Cupriavidus taiwanensis (strain DSM 17343 / BCRC 17206 / CCUG 44338 / CIP 107171 / LMG 19424 / R1) (Ralstonia taiwanensis (strain LMG 19424)), this protein is Large ribosomal subunit protein uL22.